The primary structure comprises 273 residues: Probable ribosomal RNA small subunit methyltransferase A (273 aa).

6 residues coordinate S-adenosyl-L-methionine: N23, L25, G50, E71, D95, and N110.

The protein belongs to the class I-like SAM-binding methyltransferase superfamily. rRNA adenine N(6)-methyltransferase family. RsmA subfamily.

The protein resides in the cytoplasm. Specifically dimethylates two adjacent adenosines in the loop of a conserved hairpin near the 3'-end of 16S rRNA in the 30S particle. May play a critical role in biogenesis of 30S subunits. The protein is Probable ribosomal RNA small subunit methyltransferase A of Pyrococcus furiosus (strain ATCC 43587 / DSM 3638 / JCM 8422 / Vc1).